Here is a 159-residue protein sequence, read N- to C-terminus: Putative phosphatidylinositol-3-phosphatase (159 aa).

The first 16 residues, 1–16 (MKRPSFLPVLIGTGFG), serve as a signal peptide directing secretion. Transmembrane regions (helical) follow at residues 30-50 (LLASIIWIALYFLLPFTALLW), 54-74 (ALVVLFTFAGIWAANKLESCW), 104-124 (WYVIAAFALFRIFDIVKPLGV), and 134-154 (VGVMMDDVLAGVYSFILIAVA).

It localises to the membrane. The enzyme catalyses a 1,2-diacyl-sn-glycero-3-phospho-(1D-myo-inositol-3-phosphate) + H2O = a 1,2-diacyl-sn-glycero-3-phospho-(1D-myo-inositol) + phosphate. Its function is as follows. May be responsible for the conversion of phosphatidylinositol phosphate diacylglycerol (PIP-DAG) to phosphatidylinositol diacylglycerol (PI-DAG), making it a key enzyme in the inositol glycerophospholipid biosynthesis pathway. This is Putative phosphatidylinositol-3-phosphatase from Bacteroides thetaiotaomicron (strain ATCC 29148 / DSM 2079 / JCM 5827 / CCUG 10774 / NCTC 10582 / VPI-5482 / E50).